The following is a 914-amino-acid chain: MEAIDELSQLSDSMKQAASLLADEDPDETSSSKRPATFLNVVALGNVGAGKSAVLNSLIGHPVLPTGENGATRAPIIIELSRESSLSSKAIILQIDNKSQQVSASALRHSLQDRLSKGASGKNRDEINLKLRTSTAPPLKLVDLPGLDQRIVDESMIAEYAQHNDAILLVIVPASQASEISSSRALKIAKEYDPESTRTIGIIGKIDQAAENSKALAAVQALLSNQGPPKTTDIPWVAVIGQSVSIASAQSGSGENSLETAWRAESESLKSILTGAPQSKLGRIALVDTLASQIRSRMKLRLPSVLSGLQGKSQIVQDELARLGEQLVNSAEGTRAIALELCREFEDKFLLHLAGGEGSGWKVVASFEGNFPNRIKQLPLDRHFDLNNVKRVVLEADGYQPYLISPEKGLRSLIKIVLELAKDPARLCVDEVHRVLVDIVSASANATPGLGRYPPFKREVVAIASAALDGFKNEAKKMVVALVDMERAFVPPQHFIRLVQRRMERQRREEELKGRSSKKGQDAEQSLLSRATSPQPDGPTAGGSLKSMKDKPSPQDKETPEVSGLKTAGPEGEITAGYLMKKSAKTNGWSRRWFVLNEKTGKLGYTKKQEERNFRGTITLEECTIEEIPEDEVEKSKSSKDKKANGPDSKGPGLVFKITCKVPYKTVLKAHNALVLKAESVVDKNEWINKLQKVIQARGGQVGSVSMRQSLSEGSLDKMVRKPIDPEEELRWMSQEVRGYVEAVLNSLAANVPKAVVLCQVEKAKEDMLNQLYSSISAIGNERIESLIQEDQNVKRRRERYQKQSSLLSKLTRQLSIHDNRAAAASSYSDNSGTESSPRASGGSSGDDWMNAFNSAANGPSDSLSKYGSGGHSRRYSDPAQNGDAASPGSGSNRRTTPNRLPPAPPPTGSAYRY.

Position 1 is an N-acetylmethionine (M1). The Dynamin-type G domain maps to 35–303 (PATFLNVVAL…IRSRMKLRLP (269 aa)). Residues 45 to 52 (GNVGAGKS) form a G1 motif region. Residue 45-52 (GNVGAGKS) coordinates GTP. Positions 71-73 (ATR) are G2 motif. Positions 143–146 (DLPG) are G3 motif. GTP contacts are provided by residues 143 to 147 (DLPGL) and 204 to 207 (GKID). Positions 204-207 (GKID) are G4 motif. The interval 238–241 (AVIG) is G5 motif. Positions 507–522 (RREEELKGRSSKKGQD) are enriched in basic and acidic residues. Disordered stretches follow at residues 507–570 (RREE…TAGP) and 629–648 (PEDEVEKSKSSKDKKANGPD). The span at 523 to 535 (AEQSLLSRATSPQ) shows a compositional bias: polar residues. Composition is skewed to basic and acidic residues over residues 547–560 (SMKDKPSPQDKETP) and 634–645 (EKSKSSKDKKAN). The PH domain maps to 572 to 696 (GEITAGYLMK…WINKLQKVIQ (125 aa)). One can recognise a GED domain in the interval 730–823 (LRWMSQEVRG…QLSIHDNRAA (94 aa)). Residues 781 to 805 (NERIESLIQEDQNVKRRRERYQKQS) adopt a coiled-coil conformation. A disordered region spans residues 821-914 (RAAAASSYSD…PPPTGSAYRY (94 aa)). Composition is skewed to polar residues over residues 826 to 839 (SSYSDNSGTESSPR) and 852 to 866 (AFNSAANGPSDSLSK).

Belongs to the TRAFAC class dynamin-like GTPase superfamily. Dynamin/Fzo/YdjA family. Binds PtdIns3P. Interacts with SH3P3 (via SH3 domain) and (via C-terminus) with GAMMA-ADR. May homooligomerize or heterooligomerize.

The protein localises to the cytoplasm. It localises to the cytosol. Its subcellular location is the golgi apparatus membrane. The protein resides in the cytoskeleton. It is found in the phragmoplast. The protein localises to the cytoplasmic vesicle. It localises to the clathrin-coated vesicle. The catalysed reaction is GTP + H2O = GDP + phosphate + H(+). Increased GTPase activity in the presence of phosphatidic acid. In terms of biological role, microtubule-associated force-producing protein involved in clathrin-mediated vesicle trafficking from the trans-Golgi network to the central vacuole. Able to bind and hydrolyze GTP. Binds specifically to phosphatidylinositol 3-phosphate (PtdIns3P). This Arabidopsis thaliana (Mouse-ear cress) protein is Dynamin-2A (DRP2A).